A 419-amino-acid chain; its full sequence is Adenylosuccinate synthetase (419 aa).

Residues 11–17 (GDEGKGK) and 39–41 (GHT) contribute to the GTP site. Asp12 serves as the catalytic Proton acceptor. Residues Asp12 and Gly39 each contribute to the Mg(2+) site. Residues 12 to 15 (DEGK), 37 to 40 (NAGH), Thr129, Arg143, Asn218, Thr233, and Arg297 contribute to the IMP site. Residue His40 is the Proton donor of the active site. 293-299 (VTTGRKR) is a binding site for substrate. GTP contacts are provided by residues Arg299, 325–327 (KLD), and 407–409 (GTG).

It belongs to the adenylosuccinate synthetase family. As to quaternary structure, homodimer. Mg(2+) is required as a cofactor.

Its subcellular location is the cytoplasm. The enzyme catalyses IMP + L-aspartate + GTP = N(6)-(1,2-dicarboxyethyl)-AMP + GDP + phosphate + 2 H(+). It functions in the pathway purine metabolism; AMP biosynthesis via de novo pathway; AMP from IMP: step 1/2. Functionally, plays an important role in the de novo pathway and in the salvage pathway of purine nucleotide biosynthesis. Catalyzes the first committed step in the biosynthesis of AMP from IMP. The chain is Adenylosuccinate synthetase from Coccidioides posadasii (strain C735) (Valley fever fungus).